The sequence spans 267 residues: Protein LicA (267 aa).

Belongs to the peptidase S49 family.

Its function is as follows. Mediates phase variation of the LPS epitopes. Phase variation of H.influenza LPS epitopes expressed by LicA is determined by a translational switch. This is Protein LicA (licA) from Haemophilus influenzae (strain ATCC 51907 / DSM 11121 / KW20 / Rd).